Reading from the N-terminus, the 249-residue chain is Tryptophan synthase alpha chain (249 aa).

Catalysis depends on proton acceptor residues E43 and D54.

This sequence belongs to the TrpA family. Tetramer of two alpha and two beta chains.

The enzyme catalyses (1S,2R)-1-C-(indol-3-yl)glycerol 3-phosphate + L-serine = D-glyceraldehyde 3-phosphate + L-tryptophan + H2O. It functions in the pathway amino-acid biosynthesis; L-tryptophan biosynthesis; L-tryptophan from chorismate: step 5/5. Functionally, the alpha subunit is responsible for the aldol cleavage of indoleglycerol phosphate to indole and glyceraldehyde 3-phosphate. In Campylobacter jejuni subsp. jejuni serotype O:23/36 (strain 81-176), this protein is Tryptophan synthase alpha chain.